A 41-amino-acid polypeptide reads, in one-letter code: Photosystem I reaction center subunit IX (41 aa).

A helical membrane pass occupies residues Tyr7–Ile27.

It belongs to the PsaJ family.

The protein resides in the plastid. Its subcellular location is the chloroplast thylakoid membrane. In terms of biological role, may help in the organization of the PsaE and PsaF subunits. In Thalassiosira pseudonana (Marine diatom), this protein is Photosystem I reaction center subunit IX.